The chain runs to 63 residues: MAVPARKTSKQKKRSRRGHIKLTTPAMHYDATTGEYRLSHRVSPKGFYKGRQVANENKQQNND.

Disordered stretches follow at residues 1-25 (MAVPARKTSKQKKRSRRGHIKLTTP) and 42-63 (VSPKGFYKGRQVANENKQQNND). Residues 7–20 (KTSKQKKRSRRGHI) are compositionally biased toward basic residues. Over residues 54-63 (ANENKQQNND) the composition is skewed to polar residues.

The protein belongs to the bacterial ribosomal protein bL32 family.

The polypeptide is Large ribosomal subunit protein bL32 (Lactobacillus johnsonii (strain CNCM I-12250 / La1 / NCC 533)).